The primary structure comprises 360 residues: Probable nuclear hormone receptor HR38 (360 aa).

The segment at G1–S21 is disordered. The segment at residues S23–T98 is a DNA-binding region (nuclear receptor). 2 consecutive NR C4-type zinc fingers follow at residues C26 to C46 and C62 to C86. The 236-residue stretch at P122 to S357 folds into the NR LBD domain.

Belongs to the nuclear hormone receptor family. NR4 subfamily. Forms a heterodimer with USP.

The protein localises to the nucleus. The protein is Probable nuclear hormone receptor HR38 (HR38) of Bombyx mori (Silk moth).